A 277-amino-acid polypeptide reads, in one-letter code: Basic leucine zipper transcriptional factor ATF-like 2 (277 aa).

3 disordered regions span residues 15–50, 126–146, and 191–256; these read LGESQKQLKKKQKNRVAAQRSRQKHTSKADALHQQH, FQTPGSSPRAQHLSPGPCSHE, and SFSK…QKSS. The bZIP domain occupies 18 to 81; sequence SQKQLKKKQK…AGWGRTLHLH (64 aa). A basic motif region spans residues 20-42; sequence KQLKKKQKNRVAAQRSRQKHTSK. Residues 41 to 50 show a composition bias toward basic and acidic residues; the sequence is SKADALHQQH. The tract at residues 46-67 is leucine-zipper; it reads LHQQHESLEKQNHALRKEIQAL. 2 stretches are compositionally biased toward polar residues: residues 213 to 227 and 247 to 256; these read RQEQPTSGRLASSDS and GSSTHWQKSS.

This sequence belongs to the bZIP family. In terms of assembly, heterodimer; heterodimerizes with JUN family proteins.

It is found in the nucleus. Functionally, AP-1 family transcription factor that controls the differentiation of lineage-specific cells in the immune system. Selectively suppresses CCN1 transcription and hence blocks the downstream cell proliferation signals produced by CCN1 and inhibits CCN1-induced anchorage-independent growth and invasion in several cancer types. Possibly acts by interfering with AP-1 binding to CCN1 promoter. Following infection, participates in the differentiation of CD8(+) thymic conventional dendritic cells in the immune system. Acts via the formation of a heterodimer with JUN family proteins that recognizes and binds DNA sequence 5'-TGA[CG]TCA-3' and regulates expression of target genes. This is Basic leucine zipper transcriptional factor ATF-like 2 (Batf2) from Mus musculus (Mouse).